The sequence spans 208 residues: Large ribosomal subunit protein uL3 (208 aa).

Residue glutamine 149 is modified to N5-methylglutamine.

The protein belongs to the universal ribosomal protein uL3 family. As to quaternary structure, part of the 50S ribosomal subunit. Forms a cluster with proteins L14 and L19. Post-translationally, methylated by PrmB.

Functionally, one of the primary rRNA binding proteins, it binds directly near the 3'-end of the 23S rRNA, where it nucleates assembly of the 50S subunit. In Actinobacillus pleuropneumoniae serotype 5b (strain L20), this protein is Large ribosomal subunit protein uL3.